We begin with the raw amino-acid sequence, 207 residues long: Small ribosomal subunit protein uS4 (207 aa).

Residues 30 to 54 (DKCKLDSKPGQHGRTSGARTSDYGN) are disordered. The segment covering 42–53 (GRTSGARTSDYG) has biased composition (polar residues). Positions 97–160 (SRLDNVVYRM…KKQVRIAEAL (64 aa)) constitute an S4 RNA-binding domain.

Belongs to the universal ribosomal protein uS4 family. Part of the 30S ribosomal subunit. Contacts protein S5. The interaction surface between S4 and S5 is involved in control of translational fidelity.

One of the primary rRNA binding proteins, it binds directly to 16S rRNA where it nucleates assembly of the body of the 30S subunit. Its function is as follows. With S5 and S12 plays an important role in translational accuracy. In Cupriavidus taiwanensis (strain DSM 17343 / BCRC 17206 / CCUG 44338 / CIP 107171 / LMG 19424 / R1) (Ralstonia taiwanensis (strain LMG 19424)), this protein is Small ribosomal subunit protein uS4.